Here is a 402-residue protein sequence, read N- to C-terminus: 4-hydroxy-3-methylbut-2-enyl diphosphate reductase (402 aa).

A [4Fe-4S] cluster-binding site is contributed by C66. H96 lines the (2E)-4-hydroxy-3-methylbut-2-enyl diphosphate pocket. Residue H96 coordinates dimethylallyl diphosphate. Isopentenyl diphosphate is bound at residue H96. C157 provides a ligand contact to [4Fe-4S] cluster. (2E)-4-hydroxy-3-methylbut-2-enyl diphosphate is bound at residue H185. H185 is a binding site for dimethylallyl diphosphate. Residue H185 coordinates isopentenyl diphosphate. The Proton donor role is filled by E187. T250 contacts (2E)-4-hydroxy-3-methylbut-2-enyl diphosphate. C288 contributes to the [4Fe-4S] cluster binding site. Residues S317, S318, N319, and S379 each coordinate (2E)-4-hydroxy-3-methylbut-2-enyl diphosphate. The dimethylallyl diphosphate site is built by S317, S318, N319, and S379. Isopentenyl diphosphate-binding residues include S317, S318, N319, and S379.

Belongs to the IspH family. Requires [4Fe-4S] cluster as cofactor.

It carries out the reaction isopentenyl diphosphate + 2 oxidized [2Fe-2S]-[ferredoxin] + H2O = (2E)-4-hydroxy-3-methylbut-2-enyl diphosphate + 2 reduced [2Fe-2S]-[ferredoxin] + 2 H(+). The enzyme catalyses dimethylallyl diphosphate + 2 oxidized [2Fe-2S]-[ferredoxin] + H2O = (2E)-4-hydroxy-3-methylbut-2-enyl diphosphate + 2 reduced [2Fe-2S]-[ferredoxin] + 2 H(+). It functions in the pathway isoprenoid biosynthesis; dimethylallyl diphosphate biosynthesis; dimethylallyl diphosphate from (2E)-4-hydroxy-3-methylbutenyl diphosphate: step 1/1. The protein operates within isoprenoid biosynthesis; isopentenyl diphosphate biosynthesis via DXP pathway; isopentenyl diphosphate from 1-deoxy-D-xylulose 5-phosphate: step 6/6. Its function is as follows. Catalyzes the conversion of 1-hydroxy-2-methyl-2-(E)-butenyl 4-diphosphate (HMBPP) into a mixture of isopentenyl diphosphate (IPP) and dimethylallyl diphosphate (DMAPP). Acts in the terminal step of the DOXP/MEP pathway for isoprenoid precursor biosynthesis. The protein is 4-hydroxy-3-methylbut-2-enyl diphosphate reductase of Thermosynechococcus vestitus (strain NIES-2133 / IAM M-273 / BP-1).